Consider the following 371-residue polypeptide: Histidinol-phosphate aminotransferase 2 (371 aa).

Lysine 232 bears the N6-(pyridoxal phosphate)lysine mark.

The protein belongs to the class-II pyridoxal-phosphate-dependent aminotransferase family. Histidinol-phosphate aminotransferase subfamily. As to quaternary structure, homodimer. The cofactor is pyridoxal 5'-phosphate.

It carries out the reaction L-histidinol phosphate + 2-oxoglutarate = 3-(imidazol-4-yl)-2-oxopropyl phosphate + L-glutamate. Its pathway is amino-acid biosynthesis; L-histidine biosynthesis; L-histidine from 5-phospho-alpha-D-ribose 1-diphosphate: step 7/9. This Methylococcus capsulatus (strain ATCC 33009 / NCIMB 11132 / Bath) protein is Histidinol-phosphate aminotransferase 2.